The chain runs to 127 residues: Aspartate 1-decarboxylase (127 aa).

Serine 25 functions as the Schiff-base intermediate with substrate; via pyruvic acid in the catalytic mechanism. Serine 25 is subject to Pyruvic acid (Ser). A substrate-binding site is contributed by threonine 57. Tyrosine 58 acts as the Proton donor in catalysis. Residue 73 to 75 (GAA) coordinates substrate.

This sequence belongs to the PanD family. As to quaternary structure, heterooctamer of four alpha and four beta subunits. It depends on pyruvate as a cofactor. In terms of processing, is synthesized initially as an inactive proenzyme, which is activated by self-cleavage at a specific serine bond to produce a beta-subunit with a hydroxyl group at its C-terminus and an alpha-subunit with a pyruvoyl group at its N-terminus.

It is found in the cytoplasm. The catalysed reaction is L-aspartate + H(+) = beta-alanine + CO2. It functions in the pathway cofactor biosynthesis; (R)-pantothenate biosynthesis; beta-alanine from L-aspartate: step 1/1. Functionally, catalyzes the pyruvoyl-dependent decarboxylation of aspartate to produce beta-alanine. In Listeria monocytogenes serovar 1/2a (strain ATCC BAA-679 / EGD-e), this protein is Aspartate 1-decarboxylase.